We begin with the raw amino-acid sequence, 202 residues long: S-modulin (202 aa).

Gly-2 carries N-myristoyl glycine lipidation. 4 EF-hand domains span residues 25–60 (QEEL…FPDA), 61–96 (DPKA…TSSG), 97–132 (KANQ…IFKM), and 147–182 (TPEK…NKEI). Residues Asp-74, Asn-76, Asp-78, Thr-80, Glu-85, Asp-110, Asp-112, Asn-114, Thr-116, and Glu-121 each contribute to the Ca(2+) site.

The protein belongs to the recoverin family. Post-translationally, the N-terminus is blocked.

Functionally, calcium-dependent regulator of light sensitivity of cGMP phosphodiesterase in rod outer segments. Controls rhodopsin phosphorylation in a Ca(2+)-dependent manner. This Aquarana catesbeiana (American bullfrog) protein is S-modulin.